Consider the following 164-residue polypeptide: Putative protein ZNF321 (164 aa).

In Homo sapiens (Human), this protein is Putative protein ZNF321 (ZNF321P).